Reading from the N-terminus, the 93-residue chain is Small ribosomal subunit protein uS19 (93 aa).

It belongs to the universal ribosomal protein uS19 family.

In terms of biological role, protein S19 forms a complex with S13 that binds strongly to the 16S ribosomal RNA. This is Small ribosomal subunit protein uS19 from Streptococcus gordonii (strain Challis / ATCC 35105 / BCRC 15272 / CH1 / DL1 / V288).